Reading from the N-terminus, the 517-residue chain is MDLHLDENLSTMDSLMHHYILIAILVASIIAMVVSSYGREHPLSKVPLVTEKSFWDFTGKKARDNFAANARAVIKQGFAKVGASKPFRIISDQGEMLILPPALAHDIRNVDALSHAEFMKDTTCAEVPGFEPYLESTGTTLLTDMTKTKLMSAMKWLTTPLSNSVAKSCRDLFPEDDEWHEVVLKDKLLDLIARLSSVIFLGEEEIREDPAWLRITKEYTVDSFIASHQLRPYPRYLRPFIARFLPQAQKVQAQLREAEAIITPVIERRRAEKAASTTTVERYDSIEWLEQVAEEKGIKYSPAAMQLTLALSAIHTTTDLLTTTMYEILQHPETIQLLRDEVASVVGDGRLKHSSLYNLKLMDSVIKEAQRLKPVLSINMVRMATEDIDLPDGLNIPRGTRLGVSSHASWDPKVFPNPEKFDPYRFVRLREQPGEENVWQLTTTRPEQIAFGHGQHACPGRFLAANEVKIALCHLLLKYDWELSSITMPTAISHGIMLDSDPTVKVNVRSRQSEVVL.

An N-linked (GlcNAc...) asparagine glycan is attached at asparagine 8. A helical transmembrane segment spans residues 14–34 (SLMHHYILIAILVASIIAMVV). A heme-binding site is contributed by cysteine 458.

This sequence belongs to the cytochrome P450 family. Heme serves as cofactor.

The protein localises to the membrane. Its pathway is secondary metabolite biosynthesis. In terms of biological role, cytochrome P450 monooxygenase; part of the gene cluster that mediates the biosynthesis of calbistrin A and related compounds. Calbistrin A is a secondary metabolite with an interesting structure that was recently found to have bioactivity against leukemia cells. It consists of two polyketides linked by an ester bond: a bicyclic decalin containing polyketide and a linear 12 carbon dioic acid structure. The polyketide synthase calA is probably responsible for forming the decalin moiety. Because calA lacks a designated enoylreductase (ER) domain, the required activity is provided by the trans-enoyl reductase calK. Following release from the PKS, calF then probably catalyzes the oxidation and the subsequent Diels Alder cycloisomerization that lead to the formation of the decalin moiety. The decalin polyketide backbone includes two C-methyl groups, at C7 and C11 in backbone, of which the C7 position is probably methylated by the methyltransferase domain of calA. A candidate for adding the methyl group at C11, if not done by CalA, is the cluster methyltransferase calH. Several additional tailoring enzymes within the cluster could be involved in the modification of the decalin polyketide product. Those include the 3 cytochrome P450 monooxygenases CalE, CalG and CalL, of which one might be responsible for the introduction of the extra hydroxyl group attached to the backbone of the decalin moiety, at position C9 in the backbone, that allows for attachment of the linear moiety. One tailoring enzyme activity that is expected to be involved in biosynthesis of calbistrin is an acyltransferase for connecting the two polyketide synthase products, and which could be performed by the cluster acyltransferase calJ. The enzyme responsible for the biosynthesis of the linear moiety, probably a second PKS, has not been identified yet. The sequence is that of Cytochrome P450 monooxygenase calE from Penicillium decumbens.